A 466-amino-acid chain; its full sequence is Purple acid phosphatase 25 (466 aa).

The first 21 residues, 1–21 (MRMNKILLVFVFLSIATVINS), serve as a signal peptide directing secretion. Asp164 is a Fe cation binding site. N-linked (GlcNAc...) asparagine glycosylation occurs at Asn172. Fe cation is bound by residues Asp192 and Tyr195. A Zn(2+)-binding site is contributed by Asp192. Zn(2+) is bound by residues Asn229 and His314. Substrate is bound at residue Asn229. His324 serves as the catalytic Proton donor. Position 351 (His351) interacts with Zn(2+). Position 351–353 (351–353 (HVH)) interacts with substrate. A Fe cation-binding site is contributed by His353. N-linked (GlcNAc...) asparagine glycosylation is found at Asn367 and Asn424.

The protein belongs to the metallophosphoesterase superfamily. Purple acid phosphatase family. In terms of assembly, homodimer. The cofactor is Fe cation. Zn(2+) serves as cofactor. As to expression, specifically expressed in flowers.

It is found in the secreted. The enzyme catalyses a phosphate monoester + H2O = an alcohol + phosphate. The sequence is that of Purple acid phosphatase 25 (PAP25) from Arabidopsis thaliana (Mouse-ear cress).